A 656-amino-acid polypeptide reads, in one-letter code: NADH-ubiquinone oxidoreductase chain 5 (656 aa).

A run of 17 helical transmembrane segments spans residues 5-23 (IIILPVLGSIVAGFFGRKL), 30-52 (IITCSCVIVTTILALLAWVEVGF), 81-103 (LTVSMLLPVLIISSLVHIYSISY), 112-129 (RFFSYLSLFTFMMIILVT), 133-155 (YLLMFVGWEGVGVCSYLLVSFWF), 168-190 (FLTNRVGDCFLTIGMFAILWSLG), 200-222 (LAPYINENIITIIGICLVIGAMA), 243-262 (VSALIHAATMVTAGVYLLMR), 272-294 (TVLLICLWLGAITTVFSSLVGLF), 301-320 (VIAYSTMSQLGLMVVAIGLS), 324-346 (IALFHLVNHAFYKAALFLGAGSI), 367-389 (PLTYSIILIASLSLAAFPFLTGF), 409-431 (SVYAISTIGAIFTTLYSVKVIYL), 452-471 (IFLTLPLVILAIFSIFFGYL), 514-536 (FIFTVLFSILAILLSEFIPGSVF), 607-629 (LSTGVVTSYALYILLGLISFIII), and 634-653 (QISSSLIVLLIILTLFSLNF).

The protein belongs to the complex I subunit 5 family.

Its subcellular location is the mitochondrion inner membrane. The catalysed reaction is a ubiquinone + NADH + 5 H(+)(in) = a ubiquinol + NAD(+) + 4 H(+)(out). Its function is as follows. Core subunit of the mitochondrial membrane respiratory chain NADH dehydrogenase (Complex I) that is believed to belong to the minimal assembly required for catalysis. Complex I functions in the transfer of electrons from NADH to the respiratory chain. The immediate electron acceptor for the enzyme is believed to be ubiquinone. In Cryphonectria parasitica (Chestnut blight fungus), this protein is NADH-ubiquinone oxidoreductase chain 5 (ND5).